The following is a 148-amino-acid chain: MKAVIILGLVLLSVTVQGKIFERCELARTLKRLGLDGYRGISLANWVCLAKWESNYNTQATNYNPGDQSTDYGIFQINSHYWCNNGKTPGAVNACHISCNALLQDNIADAVTCAKRVVSDPQGIRAWVAWRNHCQNRDVSQYVQGCGV.

The first 18 residues, 1–18, serve as a signal peptide directing secretion; it reads MKAVIILGLVLLSVTVQG. The region spanning 19 to 148 is the C-type lysozyme domain; it reads KIFERCELAR…VSQYVQGCGV (130 aa). 4 cysteine pairs are disulfide-bonded: Cys-24/Cys-146, Cys-48/Cys-134, Cys-83/Cys-99, and Cys-95/Cys-113. Residues Glu-53 and Asp-71 contribute to the active site.

This sequence belongs to the glycosyl hydrolase 22 family. As to quaternary structure, monomer.

Its subcellular location is the secreted. It catalyses the reaction Hydrolysis of (1-&gt;4)-beta-linkages between N-acetylmuramic acid and N-acetyl-D-glucosamine residues in a peptidoglycan and between N-acetyl-D-glucosamine residues in chitodextrins.. In terms of biological role, lysozymes have primarily a bacteriolytic function; those in tissues and body fluids are associated with the monocyte-macrophage system and enhance the activity of immunoagents. The polypeptide is Lysozyme C (LYZ) (Macaca mulatta (Rhesus macaque)).